Consider the following 67-residue polypeptide: Large ribosomal subunit protein uL29 (67 aa).

The protein belongs to the universal ribosomal protein uL29 family. In terms of assembly, part of the 50S ribosomal subunit. Contacts protein L23 and trigger factor when it is complexed with the ribosome.

Its function is as follows. Binds the 23S rRNA. One of the proteins that surrounds the polypeptide exit tunnel on the outside of the subunit. The sequence is that of Large ribosomal subunit protein uL29 (rpmC) from Deinococcus radiodurans (strain ATCC 13939 / DSM 20539 / JCM 16871 / CCUG 27074 / LMG 4051 / NBRC 15346 / NCIMB 9279 / VKM B-1422 / R1).